Reading from the N-terminus, the 422-residue chain is NADH-quinone oxidoreductase subunit D 1 (422 aa).

This sequence belongs to the complex I 49 kDa subunit family. NDH-1 is composed of 14 different subunits. Subunits NuoB, C, D, E, F, and G constitute the peripheral sector of the complex.

It is found in the cell membrane. The enzyme catalyses a quinone + NADH + 5 H(+)(in) = a quinol + NAD(+) + 4 H(+)(out). NDH-1 shuttles electrons from NADH, via FMN and iron-sulfur (Fe-S) centers, to quinones in the respiratory chain. The immediate electron acceptor for the enzyme in this species is believed to be ubiquinone. Couples the redox reaction to proton translocation (for every two electrons transferred, four hydrogen ions are translocated across the cytoplasmic membrane), and thus conserves the redox energy in a proton gradient. This Herpetosiphon aurantiacus (strain ATCC 23779 / DSM 785 / 114-95) protein is NADH-quinone oxidoreductase subunit D 1.